We begin with the raw amino-acid sequence, 479 residues long: Aspartyl/glutamyl-tRNA(Asn/Gln) amidotransferase subunit B (479 aa).

It belongs to the GatB/GatE family. GatB subfamily. In terms of assembly, heterotrimer of A, B and C subunits.

The enzyme catalyses L-glutamyl-tRNA(Gln) + L-glutamine + ATP + H2O = L-glutaminyl-tRNA(Gln) + L-glutamate + ADP + phosphate + H(+). The catalysed reaction is L-aspartyl-tRNA(Asn) + L-glutamine + ATP + H2O = L-asparaginyl-tRNA(Asn) + L-glutamate + ADP + phosphate + 2 H(+). Its function is as follows. Allows the formation of correctly charged Asn-tRNA(Asn) or Gln-tRNA(Gln) through the transamidation of misacylated Asp-tRNA(Asn) or Glu-tRNA(Gln) in organisms which lack either or both of asparaginyl-tRNA or glutaminyl-tRNA synthetases. The reaction takes place in the presence of glutamine and ATP through an activated phospho-Asp-tRNA(Asn) or phospho-Glu-tRNA(Gln). This chain is Aspartyl/glutamyl-tRNA(Asn/Gln) amidotransferase subunit B, found in Myxococcus xanthus (strain DK1622).